The following is a 1682-amino-acid chain: Merozoite surface protein 1 (1682 aa).

The first 19 residues, 1-19, serve as a signal peptide directing secretion; that stretch reads MKIIFFLCSFLFFIINTQC. Residues 68–110 form a disordered region; that stretch reads AVSTQSAKNPPGATVPSGTASTKGAIRSPGAANPSDDSSDSDA. 4 N-linked (GlcNAc...) asparagine glycosylation sites follow: asparagine 233, asparagine 462, asparagine 528, and asparagine 599. The tract at residues 696–729 is disordered; the sequence is SETTEDGGHSTHTLSQSGETEVTEETEETVGHTT. N-linked (GlcNAc...) asparagine glycosylation is found at asparagine 785, asparagine 881, asparagine 901, asparagine 947, asparagine 1071, and asparagine 1178. The disordered stretch occupies residues 870–918; the sequence is ITGTSSTSSPGNTTVNTAQSATHSNSQNQQSNASSTNTQNGVAVSSGPA. The segment covering 871–909 has biased composition (low complexity); sequence TGTSSTSSPGNTTVNTAQSATHSNSQNQQSNASSTNTQN. Disordered stretches follow at residues 1212 to 1241 and 1433 to 1453; these read TPPQ…TQIP and KEFP…DEQK. Residues 1227-1241 are compositionally biased toward polar residues; the sequence is VSGSSGSTKEETQIP. The span at 1437–1446 shows a compositional bias: pro residues; that stretch reads SSPPTTPPSP. Asparagine 1569 carries an N-linked (GlcNAc...) asparagine glycan. 2 consecutive EGF-like domains span residues 1573–1613 and 1614–1661; these read HQCV…VENP and NPTC…IFCS. Intrachain disulfides connect cysteine 1575–cysteine 1586, cysteine 1580–cysteine 1596, cysteine 1598–cysteine 1609, cysteine 1617–cysteine 1630, cysteine 1624–cysteine 1644, and cysteine 1646–cysteine 1660. Residue serine 1661 is the site of GPI-anchor amidated serine attachment. A propeptide spans 1662–1682 (removed in mature form); it reads SSNFLGISFLLILMLILYSFI.

As to quaternary structure, forms a complex composed of subunits p83, p30, p38, and p42 which remain non-covalently associated; the complex is formed at the merozoite surface prior to egress from host erythrocytes. Forms a complex composed of processed MSP1 subunits, MSP6 subunit p36 and MSP7; the complex is formed at the merozoite surface prior to egress from host erythrocytes. Within the complex, interacts (via subunit p38) with MSP6 subunit p36 and (via subunits p83, p30 and p38) with MSP7 (via subunit p22). Forms a complex composed of MSP1, MSP6, DBLMSP1 and DBLMSP2. Within the complex, interacts (via subunit p38) with DBLMSP1 and DBLMSP2. Forms a complex composed of MSP1, and rhoptry proteins RhopH3, RAP1 and CLAG9/RhopH3. Within the complex, interacts (via subunits p42 and p19) with RhopH3 (via C-terminus). Forms a complex composed of MSP1, MSP6, MSP7, MSP9 and MSP3; within the complex, MSP6 and MSP9 mediate the binding to the host erythrocyte. Interacts (via subunits p19 and p42) with MSP9; the interaction is direct; MSP1 subunits p19 or p42, and MSP9 form a co-ligand complex that interacts with host SLC4A1/Band 3 protein. May interact with PFD6. Interacts with host spectrin. Interacts with host glycophorin GYPA in a sialic acid-independent manner. In terms of assembly, interacts with host proinflammatory cytokine S100P; the interaction blocks S100P inflammatory and chemotactic activities. As to quaternary structure, interacts with host SLC4A1/Band 3 (via 5ABC region) on the host erythrocyte surface in a sialic acid-independent manner. Post-translationally, the p190 precursor is cleaved by SUB1 prior to merozoite egress into 4 subunits p83, p30, p38, and p42 which remain non-covalently associated. SUB1-mediated proteolytic cleavage occurs in an orderly manner; the first cleavage occurs at the p30/p38 site, followed by cleavage at the p83/p30 site, the last cleavage occurs at the p38/p42 site. The order of cleavage is essential for parasite viability. SUB1-mediated processing is essential for merozoite egress. In a second processing step during erythrocyte invasion, p42 is cleaved by SUB2 into p33 and p19; the latter remains attached to the merozoite surface via its GPI-anchor and is endocytosed during the subsequent ring stage.

It is found in the cell membrane. The protein localises to the secreted. The protein resides in the vacuole membrane. In terms of biological role, during the asexual blood stage, involved in merozoite egress from host erythrocytes possibly via its interaction with the host cytoskeleton protein spectrin resulting in the destabilization of the host cytoskeleton and thus leading to erythrocyte cell membrane rupture. Involved in the binding to host erythrocytes and is required for host erythrocyte invasion. Functionally, by binding to host proinflammatory cytokine S100P may interfere with host immune responses. Its function is as follows. Involved in merozoite invasion of host erythrocytes. May play a role in the biogenesis and/or function of the food vacuole during the intraerythrocytic development. The sequence is that of Merozoite surface protein 1 from Plasmodium falciparum (isolate ro-33 / Ghana).